Here is a 1832-residue protein sequence, read N- to C-terminus: Zinc finger protein 646 (1832 aa).

C2H2-type zinc fingers lie at residues 8–31 (LSCSDCQRHFPSLPELSRHRELLH), 48–70 (YRCQQCGRGYRHPGSLVNHRRTH), 75–97 (FPCTTCGKDFSNPMALKSHMRTH), 239–261 (YKCSQCGKTYKHAGSLTNHRQSH), 266–288 (YPCAICFKEFSNLMALKNHSRLH), 294–316 (YHCPHCPRVFRLPRELLEHQQSH), 374–396 (FRCGDCGRTYRHAGSLINHRKSH), and 401–424 (YPCSLCSKQLFNAAALKNHVRAHH). The segment at 26-47 (HRELLHPSPNQDSEEADSIPRP) is disordered. A compositionally biased stretch (basic residues) spans 94–108 (MRTHAPEGRRRHRPP). Positions 94–200 (MRTHAPEGRR…TNSARAPPLP (107 aa)) are disordered. Positions 313-329 (QQSHEGERQEPRWEEKG) are enriched in basic and acidic residues. A disordered region spans residues 313–346 (QQSHEGERQEPRWEEKGMPTTNGHTDESSQDQLP). A Glycyl lysine isopeptide (Lys-Gly) (interchain with G-Cter in SUMO2) cross-link involves residue lysine 451. C2H2-type zinc fingers lie at residues 465-487 (YKCSECGRAYRHRGSLVNHRHSH) and 492-514 (YQCSLCPRKYPNLMALRNHVRVH). Glycyl lysine isopeptide (Lys-Gly) (interchain with G-Cter in SUMO2) cross-links involve residues lysine 534 and lysine 557. A C2H2-type 11 zinc finger spans residues 575–597 (HICSICGLLFEDAESLERHGLTH). Serine 612 carries the phosphoserine modification. C2H2-type zinc fingers lie at residues 617 to 639 (FACRDCGKSYRHSGSLINHRQTH) and 644 to 666 (FSCGACAKHFHTMAAMKNHLRRH). The tract at residues 660–810 (KNHLRRHSRR…QPNSSSHSAN (151 aa)) is disordered. The segment covering 661-678 (NHLRRHSRRRSRRHRKRA) has biased composition (basic residues). Residue lysine 688 forms a Glycyl lysine isopeptide (Lys-Gly) (interchain with G-Cter in SUMO2) linkage. The span at 735–767 (EGDKCGLERDETHFQGDKESGGTGEGLERKDAS) shows a compositional bias: basic and acidic residues. A compositionally biased stretch (polar residues) spans 798–810 (ATGQPNSSSHSAN). 3 consecutive C2H2-type zinc fingers follow at residues 821–843 (HTCSDCGHSFPHATGLLSHRPCH), 848–870 (YQCSLCPKEFDSLPALRSHFQNH), and 881–904 (FLCCLCGMIFPGRAGYRLHRRQAH). Residues 901 to 931 (RQAHSSSGMTEGSEEEGEEEGVAEAAPARSP) form a disordered region. The span at 912-922 (GSEEEGEEEGV) shows a compositional bias: acidic residues. A C2H2-type 17; degenerate zinc finger spans residues 958-980 (HICGCCGQTYDDLGSLERHHQSQ). C2H2-type zinc fingers lie at residues 1052–1074 (FRCNQCGKTYRHGGSLVNHRKIH) and 1079–1101 (FLCPVCSRCYPNLAAYRNHLRNH). The interval 1103–1148 (RCKGSEPQVGPIPEAAGSSELQVGPIPEGGSNKPQHMAEEGPGQAE) is disordered. Glycyl lysine isopeptide (Lys-Gly) (interchain with G-Cter in SUMO2) cross-links involve residues lysine 1157, lysine 1168, and lysine 1178. 6 C2H2-type zinc fingers span residues 1203-1225 (FSCEVCGRSYKHAGSLINHRQSH), 1230-1252 (FGCQACSKGFSNLMSLKNHRRIH), 1258-1280 (FRCSECGKAFRLRKQLASHQRVH), 1299-1321 (FRCGQCGRTYRHAGSLLNHRRSH), 1326-1348 (YSCPTCPKTYSNRMALKDHQRLH), and 1364-1386 (VRCALCGRSFPGRGSLERHLREH). The interval 1274–1294 (ASHQRVHMERRGGGGTRKATR) is disordered. 2 disordered regions span residues 1377-1481 (GSLE…WVPQ) and 1509-1529 (TLSHMDSWDNRDNSSQLQPGS). Basic and acidic residues predominate over residues 1378–1393 (SLERHLREHEETEREP). Residues 1406-1417 (SEANLTGSQGLE) are compositionally biased toward polar residues. Basic and acidic residues predominate over residues 1427–1438 (PHLEDGVPRPGE). Over residues 1460–1475 (GKAGGWPVGGGLGNHS) the composition is skewed to gly residues. 6 consecutive C2H2-type zinc fingers follow at residues 1557–1579 (HYCLLCSKEFLNPVATKSHSHNH), 1585–1607 (FACPDCGKAFESHQELASHLQAH), 1677–1699 (FRCTQCGRSYRHAGSLLNHQKAH), 1704–1726 (YPCSLCPKLLPNLLSLKNHSRTH), 1732–1754 (HCCSICGKAFRTAARLEGHGRVH), and 1761–1783 (FTCPHCPRHFRRRISFVQHQQQH). The segment at 1606–1672 (AHARGHSQVP…QAVTSMAAED (67 aa)) is disordered. Residues 1781 to 1832 (QQHQEEWTVAGSGAPVAPVTGRGDLPLPPPPTPTTPLLDPSPQWPADLSFSL) are disordered.

Belongs to the krueppel C2H2-type zinc-finger protein family.

It is found in the nucleus. Its function is as follows. May be involved in transcriptional regulation. In Homo sapiens (Human), this protein is Zinc finger protein 646.